The chain runs to 155 residues: Endoribonuclease YbeY (155 aa).

Positions 64-84 (SFPMDEMRAPGDDEDPPSGLL) are disordered. Zn(2+) is bound by residues H115, H119, and H125.

This sequence belongs to the endoribonuclease YbeY family. Requires Zn(2+) as cofactor.

Its subcellular location is the cytoplasm. In terms of biological role, single strand-specific metallo-endoribonuclease involved in late-stage 70S ribosome quality control and in maturation of the 3' terminus of the 16S rRNA. This is Endoribonuclease YbeY from Cutibacterium acnes (strain DSM 16379 / KPA171202) (Propionibacterium acnes).